A 102-amino-acid polypeptide reads, in one-letter code: Large ribosomal subunit protein bL21 (102 aa).

The protein belongs to the bacterial ribosomal protein bL21 family. Part of the 50S ribosomal subunit. Contacts protein L20.

This protein binds to 23S rRNA in the presence of protein L20. This is Large ribosomal subunit protein bL21 from Stenotrophomonas maltophilia (strain K279a).